A 670-amino-acid polypeptide reads, in one-letter code: MSRHRIVRTMDYNDEYDGYDDIYGHSVEDEHCISPTDAQQWLYDRARGQQSISAFISKNKDIQEEEADEDEDEDAAFAKARRDSESFQMPQLDEIEQAKLSSCVDEVRSVVGDAVSERRIVETSMKFDYDMQKILDEILNEETNKSAKPAVNKMKAPAAPVLPKTVSKTVPTPPPKISLKEPRRGFEIPSPKVPSSPVVSGRNTPVDISAGDDISRSSATVFKVSKEQAVRNARQLYEKERADQKSHIHMIVIGHVDAGKSTLMGHLLYDTGNVSQRVMHKHEQESKKLGKQSFMYAWVLDETGEERARGITMDVGQSRIETKTKIVTLLDAPGHKDFIPNMISGATQADVALLVVDATRGEFESGFELGGQTREHAILVRSLGVNQLGVVINKLDTVGWSQDRFTEIVTKLKSFLKLAGFKDSDVSFTPCSGLTGENLTKKAQEPALTNWYSGRHLLDVIENFKIPERAIDRPLRMSVSDIYKGTGSGFCISGRVETGVLCLNDKVLVGASREQAQVKSLTMNEFPQTCVFAGDQVSVTLPALDINNVTVGCIISDPQTPIPVTTRFQARIIVFNVKVPITMGFPVLLHHQSLIEPAVVCKLTASIHKSTGEVVKKKPRCLGNNSCALVELETSRPICIERYADFKELGRVMLRVAGVTIAAGMVTKIR.

2 disordered regions span residues 60–88 (KDIQ…ESFQ) and 164–202 (KTVS…VSGR). A compositionally biased stretch (acidic residues) spans 63 to 75 (QEEEADEDEDEDA). Positions 189–200 (PSPKVPSSPVVS) are enriched in low complexity. A tr-type G domain is found at 245 to 468 (KSHIHMIVIG…DVIENFKIPE (224 aa)). Positions 254 to 261 (GHVDAGKS) are G1. GTP is bound at residue 254 to 261 (GHVDAGKS). The segment at 310 to 314 (GITMD) is G2. The segment at 331-334 (DAPG) is G3. GTP-binding positions include 393–396 (NKLD) and 432–434 (SGL). A G4 region spans residues 393-396 (NKLD). The tract at residues 432 to 434 (SGL) is G5.

This sequence belongs to the TRAFAC class translation factor GTPase superfamily. Classic translation factor GTPase family. As to quaternary structure, component of the Pelota-HBS1L complex, also named Dom34-Hbs1 complex, composed of pelo and HBS1. Expressed in ovaries (at protein level).

Its subcellular location is the cytoplasm. The catalysed reaction is GTP + H2O = GDP + phosphate + H(+). In terms of biological role, GTPase component of the Pelota-HBS1L complex, a complex that recognizes stalled ribosomes and triggers the No-Go Decay (NGD) pathway. The Pelota-HBS1L complex recognizes ribosomes stalled at the 3' end of an mRNA and engages stalled ribosomes by destabilizing mRNA in the mRNA channel. Following ribosome-binding, the Pelota-HBS1L complex promotes recruitment of pix, which drives the disassembly of stalled ribosomes, followed by degradation of damaged mRNAs as part of the NGD pathway. Together with pelo, required for transposon silencing in the ovary and testis. Together with pelo, promotes meiosis and spermatid individualization during spermatogenesis. This chain is Protein HBS1, found in Drosophila melanogaster (Fruit fly).